Reading from the N-terminus, the 148-residue chain is MRTYSPKAGEVTHAWHVIDAEDVVLGRLATQAALLLRGKHKPTYAPHVDTGDFVVVVNAEKVALTGNKRDQAFHYRHSGYPGGLRKQSFGQVLDKHPERLLEKAIKGMLPKNKLGRAMGKKLKVYAGPEHPHQAQNPQPFEINAKVEK.

Positions 128 to 148 are disordered; the sequence is PEHPHQAQNPQPFEINAKVEK.

This sequence belongs to the universal ribosomal protein uL13 family. Part of the 50S ribosomal subunit.

In terms of biological role, this protein is one of the early assembly proteins of the 50S ribosomal subunit, although it is not seen to bind rRNA by itself. It is important during the early stages of 50S assembly. The sequence is that of Large ribosomal subunit protein uL13 from Saccharopolyspora erythraea (strain ATCC 11635 / DSM 40517 / JCM 4748 / NBRC 13426 / NCIMB 8594 / NRRL 2338).